A 121-amino-acid polypeptide reads, in one-letter code: Alpha-endosulfine (121 aa).

Positions 1–53 (MSQKQEEENPAEETGEEKQDTQEKEGILPERAEEAKLKAKYPSLGQKPGGSDF) are disordered. Residue S2 is modified to N-acetylserine. Phosphoserine is present on S2. Basic and acidic residues predominate over residues 16-37 (EEKQDTQEKEGILPERAEEAKL). T21 bears the Phosphothreonine mark. S43 is subject to Phosphoserine. At S67 the chain carries Phosphoserine; by GWL. Positions 79 to 121 (NKQLPSAGPDKNLVTGDHIPTPQDLPQRKSSLVTSKLAGGQVE) are disordered. Residue S109 is modified to Phosphoserine; by PKA.

It belongs to the endosulfine family. In terms of assembly, interacts (when phosphorylated at Ser-67) with PPP2R2D. Interacts with ABCC8. Interacts with SNCA; interaction is disrupted when phosphorylated at Ser-109. Phosphorylation at Ser-67 by GWL during mitosis is essential for interaction with PPP2R2D (PR55-delta) and subsequent inactivation of PP2A. Phosphorylated by PKA. In terms of tissue distribution, widely expressed with high levels in skeletal muscle and brain and lower levels in the pancreas.

The protein localises to the cytoplasm. In terms of biological role, protein phosphatase inhibitor that specifically inhibits protein phosphatase 2A (PP2A) during mitosis. When phosphorylated at Ser-67 during mitosis, specifically interacts with PPP2R2D (PR55-delta) and inhibits its activity, leading to inactivation of PP2A, an essential condition to keep cyclin-B1-CDK1 activity high during M phase. Also acts as a stimulator of insulin secretion by interacting with sulfonylurea receptor (ABCC8), thereby preventing sulfonylurea from binding to its receptor and reducing K(ATP) channel currents. This is Alpha-endosulfine (ENSA) from Homo sapiens (Human).